A 156-amino-acid chain; its full sequence is Ribosomal RNA large subunit methyltransferase H (156 aa).

S-adenosyl-L-methionine is bound by residues Leu-72, Gly-104, and 123–128 (FGAMVW).

The protein belongs to the RNA methyltransferase RlmH family. As to quaternary structure, homodimer.

The protein localises to the cytoplasm. The catalysed reaction is pseudouridine(1915) in 23S rRNA + S-adenosyl-L-methionine = N(3)-methylpseudouridine(1915) in 23S rRNA + S-adenosyl-L-homocysteine + H(+). Its function is as follows. Specifically methylates the pseudouridine at position 1915 (m3Psi1915) in 23S rRNA. This is Ribosomal RNA large subunit methyltransferase H from Dinoroseobacter shibae (strain DSM 16493 / NCIMB 14021 / DFL 12).